The primary structure comprises 624 residues: Chaperone protein HtpG (624 aa).

Residues 1–336 (MSMKGQETRG…SNDLPLNVSR (336 aa)) form an a; substrate-binding region. Positions 337–552 (EILQDSRVTQ…ADEMSTQMAK (216 aa)) are b. The interval 553–624 (LFAAAGQQAP…IRRMNQLLTA (72 aa)) is c.

Belongs to the heat shock protein 90 family. Homodimer.

The protein localises to the cytoplasm. In terms of biological role, molecular chaperone. Has ATPase activity. In Yersinia enterocolitica serotype O:8 / biotype 1B (strain NCTC 13174 / 8081), this protein is Chaperone protein HtpG.